Consider the following 225-residue polypeptide: Ribonuclease 3 (225 aa).

Positions 5-127 constitute an RNase III domain; that stretch reads IEKLTRQLGY…IIGAVYLDSD (123 aa). Mg(2+) is bound at residue glutamate 40. Aspartate 44 is a catalytic residue. Mg(2+) is bound by residues aspartate 113 and glutamate 116. Glutamate 116 is an active-site residue. Positions 154–224 constitute a DRBM domain; the sequence is DPKTRLQEFL…AELALEQLTN (71 aa).

This sequence belongs to the ribonuclease III family. Homodimer. Requires Mg(2+) as cofactor.

Its subcellular location is the cytoplasm. The catalysed reaction is Endonucleolytic cleavage to 5'-phosphomonoester.. Functionally, digests double-stranded RNA. Involved in the processing of primary rRNA transcript to yield the immediate precursors to the large and small rRNAs (23S and 16S). Processes some mRNAs, and tRNAs when they are encoded in the rRNA operon. Processes pre-crRNA and tracrRNA of type II CRISPR loci if present in the organism. The protein is Ribonuclease 3 of Vibrio vulnificus (strain YJ016).